The following is a 363-amino-acid chain: 3-isopropylmalate dehydrogenase (363 aa).

78–91 provides a ligand contact to NAD(+); it reads GKKWDYLPIESRPE. Residues R99, R109, R138, and D227 each contribute to the substrate site. Positions 227, 251, and 255 each coordinate Mg(2+). 285–297 contributes to the NAD(+) binding site; it reads GSAPDIEGKNIAN.

It belongs to the isocitrate and isopropylmalate dehydrogenases family. LeuB type 1 subfamily. As to quaternary structure, homodimer. Requires Mg(2+) as cofactor. It depends on Mn(2+) as a cofactor.

The protein localises to the cytoplasm. The enzyme catalyses (2R,3S)-3-isopropylmalate + NAD(+) = 4-methyl-2-oxopentanoate + CO2 + NADH. Its pathway is amino-acid biosynthesis; L-leucine biosynthesis; L-leucine from 3-methyl-2-oxobutanoate: step 3/4. In terms of biological role, catalyzes the oxidation of 3-carboxy-2-hydroxy-4-methylpentanoate (3-isopropylmalate) to 3-carboxy-4-methyl-2-oxopentanoate. The product decarboxylates to 4-methyl-2 oxopentanoate. This Buchnera aphidicola subsp. Rhopalosiphum padi protein is 3-isopropylmalate dehydrogenase (leuB).